The primary structure comprises 1031 residues: MKLSFSLVFNALTLLLQVCIFAQARFSNETDMQALLEFKSQVSENNKREVLASWNHSSPFCNWIGVTCGRRRERVISLNLGGFKLTGVISPSIGNLSFLRLLNLADNSFGSTIPQKVGRLFRLQYLNMSYNLLEGRIPSSLSNCSRLSTVDLSSNHLGHGVPSELGSLSKLAILDLSKNNLTGNFPASLGNLTSLQKLDFAYNQMRGEIPDEVARLTQMVFFQIALNSFSGGFPPALYNISSLESLSLADNSFSGNLRADFGYLLPNLRRLLLGTNQFTGAIPKTLANISSLERFDISSNYLSGSIPLSFGKLRNLWWLGIRNNSLGNNSSSGLEFIGAVANCTQLEYLDVGYNRLGGELPASIANLSTTLTSLFLGQNLISGTIPHDIGNLVSLQELSLETNMLSGELPVSFGKLLNLQVVDLYSNAISGEIPSYFGNMTRLQKLHLNSNSFHGRIPQSLGRCRYLLDLWMDTNRLNGTIPQEILQIPSLAYIDLSNNFLTGHFPEEVGKLELLVGLGASYNKLSGKMPQAIGGCLSMEFLFMQGNSFDGAIPDISRLVSLKNVDFSNNNLSGRIPRYLASLPSLRNLNLSMNKFEGRVPTTGVFRNATAVSVFGNTNICGGVREMQLKPCIVQASPRKRKPLSVRKKVVSGICIGIASLLLIIIVASLCWFMKRKKKNNASDGNPSDSTTLGMFHEKVSYEELHSATSRFSSTNLIGSGNFGNVFKGLLGPENKLVAVKVLNLLKHGATKSFMAECETFKGIRHRNLVKLITVCSSLDSEGNDFRALVYEFMPKGSLDMWLQLEDLERVNDHSRSLTPAEKLNIAIDVASALEYLHVHCHDPVAHCDIKPSNILLDDDLTAHVSDFGLAQLLYKYDRESFLNQFSSAGVRGTIGYAAPEYGMGGQPSIQGDVYSFGILLLEMFSGKKPTDESFAGDYNLHSYTKSILSGCTSSGGSNAIDEGLRLVLQVGIKCSEEYPRDRMRTDEAVRELISIRSKFFSSKTTITESPRDAPQSSPQEWMLNTDMHTM.

The first 24 residues, 1–24, serve as a signal peptide directing secretion; sequence MKLSFSLVFNALTLLLQVCIFAQA. The Extracellular portion of the chain corresponds to 25 to 653; sequence RFSNETDMQA…LSVRKKVVSG (629 aa). Residues Asn-28, Asn-55, and Asn-95 are each glycosylated (N-linked (GlcNAc...) asparagine). LRR repeat units lie at residues 98–120, 122–144, 146–168, 170–193, 194–216, 218–240, 242–264, 267–289, 291–312, and 315–335; these read FLRLLNLADNSFGSTIPQKVGRL, RLQYLNMSYNLLEGRIPSSLSNC, RLSTVDLSSNHLGHGVPSELGSL, KLAILDLSKNNLTGNFPASLGNLT, SLQKLDFAYNQMRGEIPDEVARL, QMVFFQIALNSFSGGFPPALYNI, SLESLSLADNSFSGNLRADFGYL, NLRRLLLGTNQFTGAIPKTLANI, SLERFDISSNYLSGSIPLSFGK, and NLWWLGIRNNSLGNNSSSGLE. N-linked (GlcNAc...) asparagine glycosylation is found at Asn-127 and Asn-143. Asn-180 and Asn-191 each carry an N-linked (GlcNAc...) asparagine glycan. N-linked (GlcNAc...) asparagine glycosylation is present at Asn-239. Asn-288 carries an N-linked (GlcNAc...) asparagine glycan. N-linked (GlcNAc...) asparagine glycans are attached at residues Asn-323, Asn-329, Asn-342, and Asn-366. LRR repeat units follow at residues 345–368, 370–392, 394–416, 418–440, 442–464, 466–487, 490–512, 514–536, 538–560, 561–584, and 585–597; these read QLEYLDVGYNRLGGELPASIANLS, TLTSLFLGQNLISGTIPHDIGNL, SLQELSLETNMLSGELPVSFGKL, NLQVVDLYSNAISGEIPSYFGNM, RLQKLHLNSNSFHGRIPQSLGRC, YLLDLWMDTNRLNGTIPQEILQ, SLAYIDLSNNFLTGHFPEEVGKL, LLVGLGASYNKLSGKMPQAIGGC, SMEFLFMQGNSFDGAIPDISRLV, SLKNVDFSNNNLSGRIPRYLASLP, and SLRNLNLSMNKFE. Residue Asn-439 is glycosylated (N-linked (GlcNAc...) asparagine). N-linked (GlcNAc...) asparagine glycosylation occurs at Asn-478. 3 N-linked (GlcNAc...) asparagine glycosylation sites follow: Asn-571, Asn-590, and Asn-608. The chain crosses the membrane as a helical span at residues 654–674; it reads ICIGIASLLLIIIVASLCWFM. Over 675–1031 the chain is Cytoplasmic; that stretch reads KRKKKNNASD…WMLNTDMHTM (357 aa). Thr-709 bears the Phosphothreonine mark. Positions 712–1001 constitute a Protein kinase domain; sequence FSSTNLIGSG…ELISIRSKFF (290 aa). Residues 718–726 and Lys-741 each bind ATP; that span reads IGSGNFGNV. A phosphotyrosine mark is found at Tyr-791 and Tyr-836. Residue Asp-849 is the Proton acceptor of the active site. Tyr-897 carries the phosphotyrosine modification. Residues 1005-1020 are compositionally biased toward polar residues; that stretch reads TTITESPRDAPQSSPQ. Positions 1005 to 1031 are disordered; sequence TTITESPRDAPQSSPQEWMLNTDMHTM.

This sequence belongs to the protein kinase superfamily. Ser/Thr protein kinase family. In terms of assembly, binds to Pseudomonas syringae AvrPto1 and (via the kinase and cytoplasmic domains) to hopD2. Interacts with SERK3/BAK1, SERK4/BKK1, SERK1 and SERK2 in a specific ligand-induced manner. Binds to IOS1. Binds to BIK1 in the absence of pathogen elicitor; dissociates upon pathogen-associated molecular pattern (PAMP)-triggered activation. Post-translationally, autophosphorylated after elicitation with elfl18. Autophosphorylation is inhibited by the binding with avrPto1. Phosphorylation at T-836 is required for immune signaling. In terms of processing, polyubiquitinated at the kinase domain mediated by P.syringae AvrPtoB.

Its subcellular location is the cell membrane. It localises to the endomembrane system. The enzyme catalyses L-seryl-[protein] + ATP = O-phospho-L-seryl-[protein] + ADP + H(+). The catalysed reaction is L-threonyl-[protein] + ATP = O-phospho-L-threonyl-[protein] + ADP + H(+). Functionally, constitutes the pattern-recognition receptor (PPR) that determines the specific perception of elongation factor Tu (EF-Tu), a potent elicitor of the defense response to pathogen-associated molecular patterns (PAMPs); phosphorylates BIK1 upon elicitation to regulate immune responses such as defense hormone expression (e.g. jasmonic acid (JA) and salicylic acid (SA)). Reduces transformation by Rhizobium radiobacter probably by inducing plant defense during the interaction. Binding to the effector AvrPto1 from P.syringae blocks the downstream plant immune response while interaction with hopD2 decreases the phosphorylation level of EFR upon elf18 treatment. Specific endoplasmic reticulum quality control components (ERD2B, CRT3, UGGT and STT3A) are required for the biogenesis of EFR. This chain is LRR receptor-like serine/threonine-protein kinase EFR, found in Arabidopsis thaliana (Mouse-ear cress).